We begin with the raw amino-acid sequence, 426 residues long: Glutamate-1-semialdehyde 2,1-aminomutase (426 aa).

N6-(pyridoxal phosphate)lysine is present on Lys-265.

The protein belongs to the class-III pyridoxal-phosphate-dependent aminotransferase family. HemL subfamily. Homodimer. It depends on pyridoxal 5'-phosphate as a cofactor.

Its subcellular location is the cytoplasm. The catalysed reaction is (S)-4-amino-5-oxopentanoate = 5-aminolevulinate. It participates in porphyrin-containing compound metabolism; protoporphyrin-IX biosynthesis; 5-aminolevulinate from L-glutamyl-tRNA(Glu): step 2/2. In Escherichia fergusonii (strain ATCC 35469 / DSM 13698 / CCUG 18766 / IAM 14443 / JCM 21226 / LMG 7866 / NBRC 102419 / NCTC 12128 / CDC 0568-73), this protein is Glutamate-1-semialdehyde 2,1-aminomutase.